A 302-amino-acid polypeptide reads, in one-letter code: 4-hydroxy-tetrahydrodipicolinate synthase (302 aa).

Thr55 contacts pyruvate. The active-site Proton donor/acceptor is the Tyr144. Lys172 acts as the Schiff-base intermediate with substrate in catalysis. Pyruvate is bound at residue Val214.

The protein belongs to the DapA family. In terms of assembly, homotetramer; dimer of dimers.

The protein resides in the cytoplasm. It carries out the reaction L-aspartate 4-semialdehyde + pyruvate = (2S,4S)-4-hydroxy-2,3,4,5-tetrahydrodipicolinate + H2O + H(+). It functions in the pathway amino-acid biosynthesis; L-lysine biosynthesis via DAP pathway; (S)-tetrahydrodipicolinate from L-aspartate: step 3/4. Catalyzes the condensation of (S)-aspartate-beta-semialdehyde [(S)-ASA] and pyruvate to 4-hydroxy-tetrahydrodipicolinate (HTPA). The polypeptide is 4-hydroxy-tetrahydrodipicolinate synthase (Synechococcus sp. (strain CC9902)).